Consider the following 242-residue polypeptide: Venom nerve growth factor 3 (242 aa).

The signal sequence occupies residues 1–18 (MSMLCYTLIIAFLIGIWA). The propeptide occupies 19-125 (APKSEDNVPL…ALNRNIRSKR (107 aa)). Residues 48–66 (LKTSRNTDQRHPAPKKAED) are compositionally biased toward basic and acidic residues. Residues 48–69 (LKTSRNTDQRHPAPKKAEDQEL) are disordered. Cystine bridges form between cysteine 139–cysteine 203, cysteine 181–cysteine 231, and cysteine 191–cysteine 233. Asparagine 147 carries an N-linked (GlcNAc...) asparagine glycan.

This sequence belongs to the NGF-beta family. Homodimer; non-covalently linked. Expressed by the venom gland.

It is found in the secreted. Functionally, nerve growth factor is important for the development and maintenance of the sympathetic and sensory nervous systems. It stimulates division and differentiation of sympathetic and embryonic sensory neurons as well as basal forebrain cholinergic neurons in the brain. Its relevance in the snake venom is not clear. However, it has been shown to inhibit metalloproteinase-dependent proteolysis of platelet glycoprotein Ib alpha, suggesting a metalloproteinase inhibition to prevent metalloprotease autodigestion and/or protection against prey proteases. Binds a lipid between the two protein chains in the homodimer. The lipid-bound form promotes histamine relase from mouse mast cells, contrary to the lipid-free form. This is Venom nerve growth factor 3 from Demansia vestigiata (Lesser black whip snake).